Consider the following 1079-residue polypeptide: Electrogenic sodium bicarbonate cotransporter 1 (1079 aa).

The required for interaction with AHCYL1 stretch occupies residues 1–62; that stretch reads MEDEAVLDRG…EKKEKERISE (62 aa). At 1–466 the chain is on the cytoplasmic side; the sequence is MEDEAVLDRG…FASDFYDALN (466 aa). Glutamate 21 carries the phosphoserine modification. Tyrosine 30 carries the phosphotyrosine modification. The segment covering 39 to 52 has biased composition (basic residues); sequence YRRRRRHKRKAGHK. The segment at 39 to 78 is disordered; it reads YRRRRRHKRKAGHKEKKEKERISENYSDKSDVENADESSS. Over residues 53–70 the composition is skewed to basic and acidic residues; the sequence is EKKEKERISENYSDKSDV. Phosphoserine occurs at positions 61, 65, 68, 223, 232, 233, and 245. A disordered region spans residues 235–266; the sequence is SRMFSNPDNGSPAMTHRNLTSSSLNDISDKPE. A phosphothreonine mark is found at threonine 249 and threonine 254. The span at 251–260 shows a compositional bias: polar residues; it reads RNLTSSSLND. Phosphoserine occurs at positions 256, 257, and 262. Residues 467–491 traverse the membrane as a helical segment; sequence IQALSAILFIYLATVTNAITFGGLL. Residues 492-501 are Extracellular-facing; the sequence is GDATDNMQGV. Residues 502 to 520 form a helical membrane-spanning segment; that stretch reads LESFLGTAVSGAIFCLFAG. Residue glutamine 521 is a topological domain, cytoplasmic. The discontinuously helical transmembrane segment at 522 to 542 threads the bilayer; the sequence is PLTILSSTGPVLVFERLLFNF. The Extracellular portion of the chain corresponds to 543-550; it reads SKDHNFDY. The helical transmembrane segment at 551-571 threads the bilayer; it reads LEFRLWIGLWSAFMCLVLVAT. The Cytoplasmic portion of the chain corresponds to 572 to 585; sequence DASFLVQYFTRFTE. Residues 586 to 609 form a helical membrane-spanning segment; the sequence is EGFSSLISFIFIYDAFKKMIKLAD. Over 610–692 the chain is Extracellular; the sequence is YYPINSDFKV…GNNCDFVPDI (83 aa). The helical transmembrane segment at 693–710 threads the bilayer; it reads TLMSFILFLGTYTSSMAM. The Cytoplasmic portion of the chain corresponds to 711–725; sequence KKFKTSRYFPTTARK. Residues 726-745 form a helical membrane-spanning segment; it reads LISDFAIILSILIFCVIDAL. Residues 746-779 are Extracellular-facing; the sequence is VGVDTPKLIVPSEFKPTSPNRGWFVPPFGGNPWW. Residues 748-779 are interaction with CA4; the sequence is VDTPKLIVPSEFKPTSPNRGWFVPPFGGNPWW. Residues 780–807 traverse the membrane as a helical segment; the sequence is VCLAAAIPALLVTILIFMDQQITAVIVN. Residues 808–819 are Cytoplasmic-facing; sequence RKEHKLKKGAGY. A helical transmembrane segment spans residues 820 to 836; sequence HLDLFWVAILMVVCSFM. A topological domain (extracellular) is located at residue alanine 837. A discontinuously helical transmembrane segment spans residues 838–855; sequence LPWYVAATVISIAHIDSL. At 856–877 the chain is on the cytoplasmic side; sequence KMETETSAPGEQPKFLGVREQR. A helical membrane pass occupies residues 878–894; the sequence is VTGTLVFILTGLSVFMA. The Extracellular portion of the chain corresponds to 895 to 901; sequence PILKFIP. The chain crosses the membrane as a helical span at residues 902–918; that stretch reads MPVLYGVFLYMGVASLN. Over 919–960 the chain is Cytoplasmic; that stretch reads GVQFMDRLKLLLMPLKHQPDFIYLRHVPLRRVHLFTFLQVLC. An intramembrane region (discontinuously helical) is located at residues 961–986; that stretch reads LALLWILKSTVAAIIFPVMILALVAV. Residues 987–1079 lie on the Cytoplasmic side of the membrane; that stretch reads RKGMDYLFSQ…STFLERHTSC (93 aa). The interval 1002–1004 is CA2-binding; that stretch reads LDD. Positions 1012–1079 are disordered; the sequence is KKKEDEKKKK…STFLERHTSC (68 aa). Serine 1026 and serine 1029 each carry phosphoserine. The CA2-binding stretch occupies residues 1030–1033; the sequence is DNDD. Residues serine 1034 and serine 1044 each carry the phosphoserine modification. A required for basolateral targeting region spans residues 1057 to 1059; the sequence is FLS. Positions 1062–1079 are enriched in basic and acidic residues; the sequence is KPLDRERSSTFLERHTSC. At serine 1069 the chain carries Phosphoserine.

This sequence belongs to the anion exchanger (TC 2.A.31) family. In terms of assembly, homodimer. Interacts with CA2/carbonic anhydrase 2 and CA4/carbonic anhydrase 4 which may regulate transporter activity. Isoform 1 but not isoform 2 interacts with AHCYL1 (via PEST domain when phosphorylated); the interaction increases SLC4A4 isoform 1 activity. Interacts with AHCYL2. In terms of processing, phosphorylation of Ser-1026 by PKA increases the binding of CA2 and changes the Na(+):HCO3(-) stoichiometry of the transporter from 3:1 to 2:1. Phosphorylated in presence of STK39 and dephosphorylated in presence of PP1 phosphatase; phosphorylation seems to inhibit SLC4A4 activity. Post-translationally, N-glycosylated. May not be necessary for the transporter basic functions. Isoform 1 is specifically expressed in pancreatic ducts and acini. Also expressed in parotid acinar cells and in the colonic crypts.

The protein resides in the basolateral cell membrane. The protein localises to the cell membrane. The enzyme catalyses 2 hydrogencarbonate(out) + Na(+)(out) = 2 hydrogencarbonate(in) + Na(+)(in). It catalyses the reaction 3 hydrogencarbonate(out) + Na(+)(out) = 3 hydrogencarbonate(in) + Na(+)(in). Activated by cyclic AMP. Electrogenic sodium/bicarbonate cotransporter with a Na(+):HCO3(-) stoichiometry varying from 1:2 to 1:3. May regulate bicarbonate influx/efflux at the basolateral membrane of cells and regulate intracellular pH. This chain is Electrogenic sodium bicarbonate cotransporter 1 (Slc4a4), found in Mus musculus (Mouse).